The primary structure comprises 635 residues: Threonine--tRNA ligase (635 aa).

Residues 1–61 enclose the TGS domain; that stretch reads MVSIRLPDGS…DHDVALAIVT (61 aa). Residues 242-533 are catalytic; the sequence is DHRKLGKQLD…LIEHHAGAMP (292 aa). The Zn(2+) site is built by Cys-333, His-384, and His-510.

The protein belongs to the class-II aminoacyl-tRNA synthetase family. As to quaternary structure, homodimer. Zn(2+) serves as cofactor.

It localises to the cytoplasm. The catalysed reaction is tRNA(Thr) + L-threonine + ATP = L-threonyl-tRNA(Thr) + AMP + diphosphate + H(+). Its function is as follows. Catalyzes the attachment of threonine to tRNA(Thr) in a two-step reaction: L-threonine is first activated by ATP to form Thr-AMP and then transferred to the acceptor end of tRNA(Thr). Also edits incorrectly charged L-seryl-tRNA(Thr). This is Threonine--tRNA ligase from Paraburkholderia phymatum (strain DSM 17167 / CIP 108236 / LMG 21445 / STM815) (Burkholderia phymatum).